The primary structure comprises 162 residues: ATP synthase subunit b (162 aa).

The helical transmembrane segment at 8 to 28 (LTGIIQLLNFLILLFVLYKFL) threads the bilayer.

Belongs to the ATPase B chain family. As to quaternary structure, F-type ATPases have 2 components, F(1) - the catalytic core - and F(0) - the membrane proton channel. F(1) has five subunits: alpha(3), beta(3), gamma(1), delta(1), epsilon(1). F(0) has three main subunits: a(1), b(2) and c(10-14). The alpha and beta chains form an alternating ring which encloses part of the gamma chain. F(1) is attached to F(0) by a central stalk formed by the gamma and epsilon chains, while a peripheral stalk is formed by the delta and b chains.

The protein localises to the cell inner membrane. In terms of biological role, f(1)F(0) ATP synthase produces ATP from ADP in the presence of a proton or sodium gradient. F-type ATPases consist of two structural domains, F(1) containing the extramembraneous catalytic core and F(0) containing the membrane proton channel, linked together by a central stalk and a peripheral stalk. During catalysis, ATP synthesis in the catalytic domain of F(1) is coupled via a rotary mechanism of the central stalk subunits to proton translocation. Its function is as follows. Component of the F(0) channel, it forms part of the peripheral stalk, linking F(1) to F(0). This is ATP synthase subunit b from Pseudothermotoga lettingae (strain ATCC BAA-301 / DSM 14385 / NBRC 107922 / TMO) (Thermotoga lettingae).